Here is a 411-residue protein sequence, read N- to C-terminus: Arginine deiminase (411 aa).

Catalysis depends on cysteine 401, which acts as the Amidino-cysteine intermediate.

Belongs to the arginine deiminase family.

The protein localises to the cytoplasm. The enzyme catalyses L-arginine + H2O = L-citrulline + NH4(+). The protein operates within amino-acid degradation; L-arginine degradation via ADI pathway; carbamoyl phosphate from L-arginine: step 1/2. In Staphylococcus aureus (strain JH9), this protein is Arginine deiminase.